The sequence spans 383 residues: Probable L-aspartate decarboxylase (383 aa).

At Lys231 the chain carries N6-(pyridoxal phosphate)lysine.

The protein belongs to the group II decarboxylase family. MfnA subfamily. The cofactor is pyridoxal 5'-phosphate.

It catalyses the reaction L-aspartate + H(+) = beta-alanine + CO2. It functions in the pathway cofactor biosynthesis; coenzyme A biosynthesis. Functionally, catalyzes the decarboxylation of L-aspartate to produce beta-alanine. This chain is Probable L-aspartate decarboxylase, found in Thermococcus gammatolerans (strain DSM 15229 / JCM 11827 / EJ3).